We begin with the raw amino-acid sequence, 554 residues long: Asparagine synthetase B [glutamine-hydrolyzing] (554 aa).

The active-site For GATase activity is the C2. A Glutamine amidotransferase type-2 domain is found at 2–186; sequence CSIFGVFDIK…AGSYLWSQDG (185 aa). L-glutamine is bound by residues 50 to 54, 75 to 77, and D99; these read RLSIV and NGE. ATP contacts are provided by residues L233, V273, and 347–348; that span reads SG.

Belongs to the asparagine synthetase family. Homodimer.

It carries out the reaction L-aspartate + L-glutamine + ATP + H2O = L-asparagine + L-glutamate + AMP + diphosphate + H(+). It functions in the pathway amino-acid biosynthesis; L-asparagine biosynthesis; L-asparagine from L-aspartate (L-Gln route): step 1/1. Glutamine-dependent asparagine synthesis activity can be inhibited by aspartic acid analogs (such as a sulfinate derivative and (2S,3R)-2-amino-3-methylsuccinate) in vitro; the inhibition is competitive with respect to aspartate. Its function is as follows. Catalyzes the ATP-dependent conversion of aspartate into asparagine, using glutamine as a source of nitrogen. Can also use ammonia as the nitrogen source in vitro, albeit with lower efficiency. As nucleotide substrates, ATP and dATP are utilized at a similar rate in both the glutamine- and ammonia-dependent reactions, whereas GTP utilization is only 15% that of ATP, and CTP, UTP, ITP and XTP are very poor or not substrates. Also exhibits glutaminase activity. The sequence is that of Asparagine synthetase B [glutamine-hydrolyzing] (asnB) from Escherichia coli (strain K12).